A 410-amino-acid chain; its full sequence is Transcription factor Dp-1 (410 aa).

Lys3 is subject to N6-acetyllysine. Ser23 is modified (phosphoserine; by CDK2). Positions 77–114 (VVGSPHTPNTHFVSQNQPSDPSPWSAGKRNRKGEKNGK) are disordered. The segment covering 82 to 95 (HTPNTHFVSQNQPS) has biased composition (polar residues). A compositionally biased stretch (basic residues) spans 104 to 114 (KRNRKGEKNGK). The interval 105–127 (RNRKGEKNGKGLRHFSMKVCEKV) is interaction with CEBPA. A DNA-binding region spans residues 113 to 195 (GKGLRHFSMK…KKEIKWIGLP (83 aa)). The DEF box motif lies at 161-195 (DQKNIRRRVYDALNVLMAMNIISKEKKEIKWIGLP). The tract at residues 204-277 (SLEVERQRRL…KKTVIDCSIS (74 aa)) is dimerization. Residues 211-327 (RRLERIKQKQ…DLRVARSLVP (117 aa)) are enhances binding of RB protein to E2F. The DCB1 stretch occupies residues 214-246 (ERIKQKQSQLQELILQQIAFKNLVQRNRQVEQQ). The tract at residues 259–315 (LPFIIVNTSKKTVIDCSISNDKFEYLFNFDNTFEIHDDIEVLKRMGMACGLESGSCS) is DCB2. The tract at residues 370-410 (GALATSSSGSQYSGSRVETPVSCVGEDDEDDEDFNENEEED) is disordered. Low complexity predominate over residues 375–384 (SSSGSQYSGS). Acidic residues predominate over residues 394 to 410 (GEDDEDDEDFNENEEED).

It belongs to the E2F/DP family. Component of the E2F:DP transcription factor complex. Forms heterodimers with E2F family members. The complex can interact with hypophosphorylated retinoblastoma protein RB1 and related proteins (RBL1 and RBL2) that inhibit the E2F transactivation domain. This repression involves recruitment of histone deacetylase (HDAC). During the cell cycle, from mid-to-late G1 phase, RB family members become phosphorylated, detach from the DRTF1/E2F complex to render E2F transcriptionally active. Part of the E2F6.com-1 complex in G0 phase is composed of E2F6, MGA, MAX, TFDP1, CBX3, BAT8, EUHMTASE1, RING1, RNF2, MBLR, L3MBTL2 YAF2. Component of the DREAM complex (also named LINC complex) at least composed of E2F4, E2F5, LIN9, LIN37, LIN52, LIN54, MYBL1, MYBL2, RBL1, RBL2, RBBP4, TFDP1 and TFDP2. The complex exists in quiescent cells where it represses cell cycle-dependent genes. It dissociates in S phase when LIN9, LIN37, LIN52 and LIN54 form a subcomplex that binds to MYBL2. The complex TFDP1:E2F1 interacts with CEBPA; the interaction prevents CEBPA binding to target gene promoters and represses its transcriptional activity. Ubiquitinated by the BCR(KBTBD5) complex, leading to its subsequent degradation. Post-translationally, phosphorylation by E2F1-bound cyclin A-CDK2, in the S phase, inhibits E2F-mediated DNA binding and transactivation.

The protein resides in the nucleus. It is found in the cytoplasm. Can stimulate E2F-dependent transcription. Binds DNA cooperatively with E2F family members through the E2 recognition site, 5'-TTTC[CG]CGC-3', found in the promoter region of a number of genes whose products are involved in cell cycle regulation or in DNA replication. The E2F1:DP complex appears to mediate both cell proliferation and apoptosis. Blocks adipocyte differentiation by repressing CEBPA binding to its target gene promoters. The protein is Transcription factor Dp-1 (TFDP1) of Bos taurus (Bovine).